Consider the following 396-residue polypeptide: NADH-quinone oxidoreductase subunit D (396 aa).

Belongs to the complex I 49 kDa subunit family. In terms of assembly, NDH-1 is composed of 14 different subunits. Subunits NuoB, C, D, E, F, and G constitute the peripheral sector of the complex.

The protein localises to the cell inner membrane. It catalyses the reaction a quinone + NADH + 5 H(+)(in) = a quinol + NAD(+) + 4 H(+)(out). Its function is as follows. NDH-1 shuttles electrons from NADH, via FMN and iron-sulfur (Fe-S) centers, to quinones in the respiratory chain. The immediate electron acceptor for the enzyme in this species is believed to be ubiquinone. Couples the redox reaction to proton translocation (for every two electrons transferred, four hydrogen ions are translocated across the cytoplasmic membrane), and thus conserves the redox energy in a proton gradient. This chain is NADH-quinone oxidoreductase subunit D, found in Bartonella bacilliformis (strain ATCC 35685 / KC583 / Herrer 020/F12,63).